A 777-amino-acid polypeptide reads, in one-letter code: 1,4-alpha-glucan branching enzyme GlgB (777 aa).

Aspartate 408 serves as the catalytic Nucleophile. Catalysis depends on glutamate 461, which acts as the Proton donor.

It belongs to the glycosyl hydrolase 13 family. GlgB subfamily. As to quaternary structure, monomer.

The catalysed reaction is Transfers a segment of a (1-&gt;4)-alpha-D-glucan chain to a primary hydroxy group in a similar glucan chain.. It functions in the pathway glycan biosynthesis; glycogen biosynthesis. Functionally, catalyzes the formation of the alpha-1,6-glucosidic linkages in glycogen by scission of a 1,4-alpha-linked oligosaccharide from growing alpha-1,4-glucan chains and the subsequent attachment of the oligosaccharide to the alpha-1,6 position. The protein is 1,4-alpha-glucan branching enzyme GlgB of Actinobacillus pleuropneumoniae serotype 5b (strain L20).